Reading from the N-terminus, the 86-residue chain is Large ribosomal subunit protein bL31 (86 aa).

The segment at 66 to 86 (GMGSANSATSKEQKADKDSQK) is disordered. The span at 76 to 86 (KEQKADKDSQK) shows a compositional bias: basic and acidic residues.

This sequence belongs to the bacterial ribosomal protein bL31 family. Type A subfamily. In terms of assembly, part of the 50S ribosomal subunit.

In terms of biological role, binds the 23S rRNA. This Prochlorococcus marinus (strain MIT 9215) protein is Large ribosomal subunit protein bL31.